A 208-amino-acid polypeptide reads, in one-letter code: Dephospho-CoA kinase (208 aa).

A DPCK domain is found at V11 to D207. A19–A24 is a binding site for ATP.

This sequence belongs to the CoaE family.

It is found in the cytoplasm. The catalysed reaction is 3'-dephospho-CoA + ATP = ADP + CoA + H(+). The protein operates within cofactor biosynthesis; coenzyme A biosynthesis; CoA from (R)-pantothenate: step 5/5. Functionally, catalyzes the phosphorylation of the 3'-hydroxyl group of dephosphocoenzyme A to form coenzyme A. The sequence is that of Dephospho-CoA kinase from Hahella chejuensis (strain KCTC 2396).